The following is a 286-amino-acid chain: Undecaprenyl-diphosphatase (286 aa).

Transmembrane regions (helical) follow at residues 50–70 (GAAF…VYFW), 97–117 (MGWL…IFQD), 126–146 (LWIV…ADAV), 156–176 (LTYK…IPGV), 200–220 (SFLL…YKVM), 236–256 (LATL…LKFV), and 264–284 (FVWY…FNVI).

It belongs to the UppP family.

Its subcellular location is the cell membrane. The catalysed reaction is di-trans,octa-cis-undecaprenyl diphosphate + H2O = di-trans,octa-cis-undecaprenyl phosphate + phosphate + H(+). Its function is as follows. Catalyzes the dephosphorylation of undecaprenyl diphosphate (UPP). Confers resistance to bacitracin. This chain is Undecaprenyl-diphosphatase, found in Arthrobacter sp. (strain FB24).